Consider the following 603-residue polypeptide: Membrane protein insertase YidC (603 aa).

The chain crosses the membrane as a helical span at residues 7-27; the sequence is FFITIALSVLILAVWQYFYVL. The segment covering 38–51 has biased composition (basic and acidic residues); that stretch reads RVEQQRVEEQKKAA. The disordered stretch occupies residues 38–76; that stretch reads RVEQQRVEEQKKAAEAANPGAGTPAPAPGTIPNAPGGDT. A compositionally biased stretch (low complexity) spans 52–74; the sequence is EAANPGAGTPAPAPGTIPNAPGG. Transmembrane regions (helical) follow at residues 352–372, 378–398, 452–472, 497–517, and 540–560; these read FDLL…FWLI, FLGN…ALFF, WPVA…YITI, LFGL…WPLI, and IFTW…AGLV.

This sequence belongs to the OXA1/ALB3/YidC family. Type 1 subfamily. In terms of assembly, interacts with the Sec translocase complex via SecD. Specifically interacts with transmembrane segments of nascent integral membrane proteins during membrane integration.

It is found in the cell inner membrane. Required for the insertion and/or proper folding and/or complex formation of integral membrane proteins into the membrane. Involved in integration of membrane proteins that insert both dependently and independently of the Sec translocase complex, as well as at least some lipoproteins. Aids folding of multispanning membrane proteins. The chain is Membrane protein insertase YidC from Mesorhizobium japonicum (strain LMG 29417 / CECT 9101 / MAFF 303099) (Mesorhizobium loti (strain MAFF 303099)).